The sequence spans 337 residues: Glycerol-3-phosphate dehydrogenase [NAD(P)+] (337 aa).

NADPH is bound by residues Ser-11, Trp-12, Arg-32, and Lys-109. Sn-glycerol 3-phosphate-binding residues include Lys-109, Gly-140, and Ser-142. NADPH is bound at residue Ala-144. Sn-glycerol 3-phosphate is bound by residues Lys-195, Asp-248, Ser-258, Arg-259, and Asn-260. Lys-195 (proton acceptor) is an active-site residue. Arg-259 serves as a coordination point for NADPH. NADPH-binding residues include Val-283 and Glu-285.

This sequence belongs to the NAD-dependent glycerol-3-phosphate dehydrogenase family.

It localises to the cytoplasm. The catalysed reaction is sn-glycerol 3-phosphate + NAD(+) = dihydroxyacetone phosphate + NADH + H(+). It catalyses the reaction sn-glycerol 3-phosphate + NADP(+) = dihydroxyacetone phosphate + NADPH + H(+). It functions in the pathway membrane lipid metabolism; glycerophospholipid metabolism. Catalyzes the reduction of the glycolytic intermediate dihydroxyacetone phosphate (DHAP) to sn-glycerol 3-phosphate (G3P), the key precursor for phospholipid synthesis. The sequence is that of Glycerol-3-phosphate dehydrogenase [NAD(P)+] from Limosilactobacillus fermentum (strain NBRC 3956 / LMG 18251) (Lactobacillus fermentum).